A 509-amino-acid polypeptide reads, in one-letter code: Solute carrier family 2, facilitated glucose transporter member 4 (509 aa).

Residues 1–24 (MPSGFQQIGSEDGEPPQQRVTGTL) are Cytoplasmic-facing. The tract at residues 7 to 13 (QIGSEDG) is interaction with SRFBP1. Residue S10 is modified to Phosphoserine. The chain crosses the membrane as a helical span at residues 25 to 45 (VLAVFSAVLGSLQFGYNIGVI). The Extracellular segment spans residues 46 to 81 (NAPQKVIEQSYNETWLGRQGPEGPSSIPPGTLTTLW). N-linked (GlcNAc...) asparagine glycosylation is present at N57. Residues 82–102 (ALSVAIFSVGGMISSFLIGII) traverse the membrane as a helical segment. The Cytoplasmic segment spans residues 103-111 (SQWLGRKRA). Residues 112 to 132 (MLVNNVLAVLGGSLMGLANAA) form a helical membrane-spanning segment. The Extracellular segment spans residues 133 to 142 (ASYEMLILGR). The chain crosses the membrane as a helical span at residues 143 to 163 (FLIGAYSGLTSGLVPMYVGEI). Residues 164–171 (APTHLRGA) lie on the Cytoplasmic side of the membrane. The chain crosses the membrane as a helical span at residues 172–192 (LGTLNQLAIVIGILIAQVLGL). Q177 provides a ligand contact to D-glucose. Residues 193 to 201 (ESLLGTASL) are Extracellular-facing. A helical transmembrane segment spans residues 202-222 (WPLLLGLTVLPALLQLVLLPF). C223 carries the S-palmitoyl cysteine lipid modification. The Cytoplasmic portion of the chain corresponds to 223-287 (CPESPRYLYI…LLGSRTHRQP (65 aa)). A Phosphoserine; by SGK1 modification is found at S274. Residues 288–308 (LIIAVVLQLSQQLSGINAVFY) traverse the membrane as a helical segment. D-glucose contacts are provided by residues 298-299 (QQ) and N304. The Extracellular portion of the chain corresponds to 309 to 323 (YSTSIFETAGVGQPA). Residues 324 to 344 (YATIGAGVVNTVFTLVSVLLV) form a helical membrane-spanning segment. N333 is a D-glucose binding site. Residues 345 to 353 (ERAGRRTLH) lie on the Cytoplasmic side of the membrane. A helical membrane pass occupies residues 354-374 (LLGLAGMCGCAILMTVALLLL). The Extracellular segment spans residues 375-384 (ERVPAMSYVS). The helical transmembrane segment at 385 to 405 (IVAIFGFVAFFEIGPGPIPWF) threads the bilayer. E396 and W404 together coordinate D-glucose. At 406-417 (IVAELFSQGPRP) the chain is on the cytoplasmic side. Residues 418–438 (AAMAVAGFSNWTSNFIIGMGF) form a helical membrane-spanning segment. The Extracellular portion of the chain corresponds to 439-445 (QYVAEAM). Residues 446–466 (GPYVFLLFAVLLLGFFIFTFL) traverse the membrane as a helical segment. Topologically, residues 467-509 (RVPETRGRTFDQISAAFHRTPSLLEQEVKPSTELEYLGPDEND) are cytoplasmic. T486 carries the post-translational modification Phosphothreonine. S488 is subject to Phosphoserine. The Dileucine internalization motif signature appears at 489–490 (LL).

Belongs to the major facilitator superfamily. Sugar transporter (TC 2.A.1.1) family. Glucose transporter subfamily. In terms of assembly, interacts with NDUFA9. Binds to DAXX. Interacts via its N-terminus with SRFBP1. Interacts with TRARG1; the interaction is required for proper SLC2A4 recycling after insulin stimulation. Post-translationally, sumoylated. Palmitoylated. Palmitoylation by ZDHHC7 controls the insulin-dependent translocation of GLUT4 to the plasma membrane. As to expression, skeletal and cardiac muscles; brown and white fat.

The protein localises to the cell membrane. Its subcellular location is the endomembrane system. It is found in the cytoplasm. It localises to the perinuclear region. The enzyme catalyses D-glucose(out) = D-glucose(in). Its function is as follows. Insulin-regulated facilitative glucose transporter, which plays a key role in removal of glucose from circulation. Response to insulin is regulated by its intracellular localization: in the absence of insulin, it is efficiently retained intracellularly within storage compartments in muscle and fat cells. Upon insulin stimulation, translocates from these compartments to the cell surface where it transports glucose from the extracellular milieu into the cell. The sequence is that of Solute carrier family 2, facilitated glucose transporter member 4 from Homo sapiens (Human).